The sequence spans 709 residues: Heme/hemopexin utilization protein C (709 aa).

The first 21 residues, 1-21 (MRFSKLSLAITTTLVTANALA), serve as a signal peptide directing secretion. The TBDR plug domain occupies 36–147 (DPSRFTYTPQ…LGGVVAMRTP (112 aa)). Residues 158–709 (KFGVKIRQGY…NAKISAVYSF (552 aa)) enclose the TBDR beta-barrel domain. The TonB C-terminal box signature appears at 692-709 (SLMEGTGRNAKISAVYSF).

It belongs to the TonB-dependent receptor family.

It is found in the cell outer membrane. Functionally, required for utilization of free heme at low concentrations. The chain is Heme/hemopexin utilization protein C (hxuC) from Haemophilus influenzae (strain 86-028NP).